Here is a 1174-residue protein sequence, read N- to C-terminus: Male determiner protein Mdmd(III) (1174 aa).

Residues 1-15 (MNATDAESRKPENKP) are compositionally biased toward basic and acidic residues. Disordered regions lie at residues 1 to 51 (MNAT…SGQR), 80 to 109 (KDGSNEMLPKEDSINTNHNYTTDSNEHPVE), and 136 to 259 (KQLS…LRRS). The span at 16-35 (SSESSSSGSTSGSSDGEVSS) shows a compositional bias: low complexity. The span at 36 to 47 (KTYFKNNKSKVL) shows a compositional bias: polar residues. Basic and acidic residues predominate over residues 80-92 (KDGSNEMLPKEDS). The segment covering 93–102 (INTNHNYTTD) has biased composition (polar residues). The span at 138 to 153 (LSAYRSRSRSTRLSYS) shows a compositional bias: low complexity. A compositionally biased stretch (basic residues) spans 167–180 (SRYKKSVLRNRRTS). The span at 183–200 (HGRDSSTTKRSVSRDKDN) shows a compositional bias: basic and acidic residues. The segment covering 201–223 (RLRRRIGSSRSHTRSHSRFRRSE) has biased composition (basic residues). Over residues 235–259 (RSQERRHERRRSMSSDYERIALRRS) the composition is skewed to basic and acidic residues. Residues 348-531 (KKYIHGYINK…KVLFQVRRDG (184 aa)) form the MIF4G domain. In terms of domain architecture, MI spans 641–757 (ALRRTIYLTL…SWDVLDCIKL (117 aa)). A compositionally biased stretch (low complexity) spans 840–857 (SAPSSSSSSSLSSELSAP). Disordered stretches follow at residues 840–1045 (SAPS…SRTK) and 1096–1133 (KDNYGNRQNHEISQRHDSEIKRRREERKKRHHEKNHSR). The segment covering 869–909 (KKKHKGKNKKMTKKKNPSKKKEKTKKFVGKNKIAAKNKTIK) has biased composition (basic residues). Residues 910–924 (RRTDKDNSSSKDNFL) show a composition bias toward basic and acidic residues. A compositionally biased stretch (low complexity) spans 926–957 (SESSSNESISLDSLSSELFAPSSYSSSESSND). A compositionally biased stretch (basic residues) spans 963 to 1001 (KHKGKNKKMTKKKNPSNKKEKTKKKLSKNKKAPNKNTKK). A compositionally biased stretch (low complexity) spans 1010-1020 (SSESSISESKS). Over residues 1034–1045 (RKKRVTSKSRTK) the composition is skewed to basic residues. Basic and acidic residues predominate over residues 1103–1118 (QNHEISQRHDSEIKRR). Residues 1119 to 1130 (REERKKRHHEKN) show a composition bias toward basic residues.

The protein belongs to the CWC22 family. Component of the spliceosome C complex.

It is found in the nucleus speckle. Its function is as follows. Male determiner protein (M-factor) that controls male somatic sexual differentiation. Acts as a dominant factor that regulates the mRNA splicing of transformer (tra) and doublesex (dsx) transcripts and promotes expression of male splice forms of tra and dsx. Probably acts as a component of the spliceosome C complex required for mRNA splicing factor and exon-junction complex (EJC) assembly. Hinders eIF4AIII from non-specifically binding RNA and escorts it to the splicing machinery to promote EJC assembly on mature mRNAs. This is Male determiner protein Mdmd(III) from Musca domestica (House fly).